The primary structure comprises 412 residues: Serine hydroxymethyltransferase (412 aa).

Residues Leu-117 and 121–123 each bind (6S)-5,6,7,8-tetrahydrofolate; that span reads GHL. The residue at position 226 (Lys-226) is an N6-(pyridoxal phosphate)lysine. Glu-241 contributes to the (6S)-5,6,7,8-tetrahydrofolate binding site.

It belongs to the SHMT family. As to quaternary structure, homodimer. The cofactor is pyridoxal 5'-phosphate.

The protein resides in the cytoplasm. The enzyme catalyses (6R)-5,10-methylene-5,6,7,8-tetrahydrofolate + glycine + H2O = (6S)-5,6,7,8-tetrahydrofolate + L-serine. The protein operates within one-carbon metabolism; tetrahydrofolate interconversion. It functions in the pathway amino-acid biosynthesis; glycine biosynthesis; glycine from L-serine: step 1/1. Functionally, catalyzes the reversible interconversion of serine and glycine with tetrahydrofolate (THF) serving as the one-carbon carrier. This reaction serves as the major source of one-carbon groups required for the biosynthesis of purines, thymidylate, methionine, and other important biomolecules. Also exhibits THF-independent aldolase activity toward beta-hydroxyamino acids, producing glycine and aldehydes, via a retro-aldol mechanism. The polypeptide is Serine hydroxymethyltransferase (Staphylococcus carnosus (strain TM300)).